A 349-amino-acid chain; its full sequence is MNFLYSTVNTLRDRYTPVSHKSTFRQTGQITPEEFVAAGDYLVYKFPTWSWGDADSPERRVSHLPPGKQFLVTRNVPCHRRLNDDFAGDAGHEEALVNDGDDFKGNAGDDEDGWLRTGGLASSQPLKVKEVRTVDDSGNVGDREVVEDDEIPDMEDEDDDEAIIRDSGADSKNSAHRTYTLYIMYSPYYRTPRLYLSGYLANGQPLPPTDMTEDIVGDYKDKTVTLEDFPFFANNIKMASVHPCKHASVMKTLLDRADAALRLRREKLRAGNASSSQAPSGMEGLVDEIGKLDVKGAQEAADKDEWEEVQEAEIDDQEVAIRVDQYLVVFLKFMASVTPGIEHDFTMGV.

Positions 95–173 (ALVNDGDDFK…IRDSGADSKN (79 aa)) are flexible region. C244 (glycyl thioester intermediate) is an active-site residue. The handle region stretch occupies residues 248–325 (SVMKTLLDRA…DQEVAIRVDQ (78 aa)). The ATG8 interaction motif (AIM) signature appears at 306–309 (WEEV).

The protein belongs to the ATG3 family. In terms of assembly, monomer. Interacts with ATG8 through an intermediate thioester bond between Cys-244 and the C-terminal Gly of ATG8. Interacts with the C-terminal region of the E1-like ATG7 enzyme. Also interacts with the ATG12-ATG5 conjugate.

It is found in the cytoplasm. In terms of biological role, E2 conjugating enzyme required for the cytoplasm to vacuole transport (Cvt) and autophagy. Required for selective autophagic degradation of the nucleus (nucleophagy) as well as for mitophagy which contributes to regulate mitochondrial quantity and quality by eliminating the mitochondria to a basal level to fulfill cellular energy requirements and preventing excess ROS production. Responsible for the E2-like covalent binding of phosphatidylethanolamine to the C-terminal Gly of ATG8. The ATG12-ATG5 conjugate plays a role of an E3 and promotes the transfer of ATG8 from ATG3 to phosphatidylethanolamine (PE). This step is required for the membrane association of ATG8. The formation of the ATG8-phosphatidylethanolamine conjugate is essential for autophagy and for the cytoplasm to vacuole transport (Cvt). The ATG8-PE conjugate mediates tethering between adjacent membranes and stimulates membrane hemifusion, leading to expansion of the autophagosomal membrane during autophagy. Autophagy is required for proper vegetative growth, asexual/sexual reproduction, and full virulence. Autophagy is particularly involved in the biosynthesis of deoxynivalenol (DON), an important virulence determinant. This Gibberella zeae (strain ATCC MYA-4620 / CBS 123657 / FGSC 9075 / NRRL 31084 / PH-1) (Wheat head blight fungus) protein is Autophagy-related protein 3.